Reading from the N-terminus, the 102-residue chain is Small ribosomal subunit protein uS10 (102 aa).

This sequence belongs to the universal ribosomal protein uS10 family. Part of the 30S ribosomal subunit.

Involved in the binding of tRNA to the ribosomes. The sequence is that of Small ribosomal subunit protein uS10 from Lactobacillus delbrueckii subsp. bulgaricus (strain ATCC 11842 / DSM 20081 / BCRC 10696 / JCM 1002 / NBRC 13953 / NCIMB 11778 / NCTC 12712 / WDCM 00102 / Lb 14).